We begin with the raw amino-acid sequence, 723 residues long: Host cell factor 2 (723 aa).

Kelch repeat units lie at residues 34-79, 83-130, 207-255, and 257-305; these read LMII…GFVC, RILV…RLGH, KMYV…VIGN, and MYIF…DSQE. 3 consecutive Fibronectin type-III domains span residues 357 to 436, 516 to 606, and 608 to 720; these read PPAP…ANCT, TPSN…TCIP, and FPGA…SKKA. A disordered region spans residues 398–472; sequence AASPDASAAP…VALHSPLAPN (75 aa). Positions 419–433 are enriched in polar residues; that stretch reads QGSNSILHNSVSDPA.

Binds KMT2A/MLL1. Component of the MLL1/MLL complex, at least composed of KMT2A/MLL1, ASH2L, RBBP5, DPY30, WDR5, MEN1, HCFC1 and HCFC2. Interacts with TASOR.

It localises to the cytoplasm. Its subcellular location is the nucleus. The sequence is that of Host cell factor 2 (Hcfc2) from Rattus norvegicus (Rat).